Here is a 370-residue protein sequence, read N- to C-terminus: tRNA-specific 2-thiouridylase MnmA (370 aa).

Residues 8 to 15 (GMSGGVDS) and Met-34 each bind ATP. The interaction with target base in tRNA stretch occupies residues 104–106 (NPD). Residue Cys-109 is the Nucleophile of the active site. Cys-109 and Cys-202 are oxidised to a cystine. Gly-134 is an ATP binding site. Positions 152–154 (KDQ) are interaction with tRNA. The active-site Cysteine persulfide intermediate is Cys-202. An interaction with tRNA region spans residues 309 to 310 (RY).

Belongs to the MnmA/TRMU family.

It localises to the cytoplasm. It carries out the reaction S-sulfanyl-L-cysteinyl-[protein] + uridine(34) in tRNA + AH2 + ATP = 2-thiouridine(34) in tRNA + L-cysteinyl-[protein] + A + AMP + diphosphate + H(+). Its function is as follows. Catalyzes the 2-thiolation of uridine at the wobble position (U34) of tRNA, leading to the formation of s(2)U34. The protein is tRNA-specific 2-thiouridylase MnmA of Metamycoplasma arthritidis (strain 158L3-1) (Mycoplasma arthritidis).